A 139-amino-acid polypeptide reads, in one-letter code: Small ribosomal subunit protein bS16 (139 aa).

The segment at 84 to 139 (KGEPAPAPLLQPAEKAARPSFEAIGGEDEGKGEAITQKKKADKKDEAAAESSASEA) is disordered.

Belongs to the bacterial ribosomal protein bS16 family.

The sequence is that of Small ribosomal subunit protein bS16 from Streptomyces coelicolor (strain ATCC BAA-471 / A3(2) / M145).